We begin with the raw amino-acid sequence, 228 residues long: UPF0758 protein CLK_2387 (228 aa).

The MPN domain maps to 106-228 (KISTPLDVSN…YVSMKEKGTI (123 aa)). H177, H179, and D190 together coordinate Zn(2+). A JAMM motif motif is present at residues 177–190 (HNHPSGDPTPSKED).

This sequence belongs to the UPF0758 family.

The sequence is that of UPF0758 protein CLK_2387 from Clostridium botulinum (strain Loch Maree / Type A3).